A 122-amino-acid chain; its full sequence is Small ribosomal subunit protein bS16 (122 aa).

Residues Arg85–Glu122 are disordered. Basic and acidic residues predominate over residues Arg99–Lys110. Residues Ala111–Glu122 show a composition bias toward low complexity.

The protein belongs to the bacterial ribosomal protein bS16 family.

This is Small ribosomal subunit protein bS16 from Rhizobium etli (strain ATCC 51251 / DSM 11541 / JCM 21823 / NBRC 15573 / CFN 42).